Reading from the N-terminus, the 336-residue chain is Potassium channel subfamily K member 1 (336 aa).

The Cytoplasmic segment spans residues methionine 1–alanine 20. Residues tryptophan 21–phenylalanine 41 form a helical membrane-spanning segment. At serine 42–aspartate 103 the chain is on the extracellular side. N-linked (GlcNAc...) asparagine glycosylation is present at asparagine 95. The segment at residues phenylalanine 104–serine 116 is an intramembrane region (helical). The stretch at threonine 117–histidine 122 is an intramembrane region. The tract at residues threonine 117–histidine 122 is selectivity filter 1. Topologically, residues threonine 123 to alanine 132 are extracellular. The helical transmembrane segment at phenylalanine 133–valine 156 threads the bilayer. Topologically, residues threonine 157–isoleucine 181 are cytoplasmic. A helical transmembrane segment spans residues valine 182 to valine 202. The Extracellular segment spans residues phenylalanine 203–asparagine 211. The helical intramembrane region spans phenylalanine 212 to serine 224. The segment at threonine 225–aspartate 230 is selectivity filter 2. Residues threonine 225 to tyrosine 231 lie within the membrane without spanning it. At valine 232–glutamate 243 the chain is on the extracellular side. A helical transmembrane segment spans residues leucine 244 to phenylalanine 267. Residues cysteine 268 to histidine 336 lie on the Cytoplasmic side of the membrane. A Glycyl lysine isopeptide (Lys-Gly) (interchain with G-Cter in SUMO) cross-link involves residue lysine 274. Residues isoleucine 293–leucine 299 form an important for intracellular retention in recycling endosomes region. Residues glycine 310–histidine 336 are disordered. Serine 326 is modified (phosphoserine).

It belongs to the two pore domain potassium channel (TC 1.A.1.8) family. Homodimer; disulfide-linked. Heterodimer with KCNK2; disulfide-linked. In astrocytes, forms mostly heterodimeric potassium channels with KCNK2, with only a minor proportion of functional channels containing homodimeric KCNK1. Interacts with KCNK3 and KCNK9, forming functional heterodimeric channels. Interacts with GNG4. Identified in a complex with PSD and ARF6; interacts only with PSD that is bound to ARF6. Interacts with UBE2I. In terms of processing, sumoylation is controversial. Sumoylated by UBE2I. Not sumoylated when expressed in xenopus oocytes or mammalian cells. Sumoylation inactivates the channel, but does not interfere with expression at the cell membrane. Sumoylation of a single subunit is sufficient to silence the dimeric channel. Sumoylation of KCNK1 is sufficient to silence heterodimeric channels formed by KCNK1 and KCNK3 or KCNK9. Desumoylated by SENP1; this activates the channel. Desumoylated by SENP1; this strongly increases halothane-mediated activation of heterodimeric channels formed with KCNK9. SENP1 treatment has no effect. In terms of tissue distribution, detected in brain and in kidney cortex and medulla, especially at the renal brush border membranes of the proximal convoluted tubules, in distal tubules and on intercalated cells of the collecting duct. Detected in cerebellum granule neurons. Detected in astrocytes in hippocampus stratum radiatum. Highly expressed in the stria vascularis in the cochlea. Detected in neurons in Scarpa's ganglion in the inner ear, at nerve terminals in the crista ampullaris, in supporting cells and dark cells, but not in hair cells (at protein level). Detected in the brain cerebellar granule cell layer, amygdala, thalamus reticular nucleus, habenula, mesencephalic trigeminal neurons, neocortex and piriform cortex, and at lower levels in the olfactory bulb. Detected in Scarpa's ganglia and crista ampullaris in the inner ear.

Its subcellular location is the cell membrane. It is found in the recycling endosome. The protein localises to the apical cell membrane. The protein resides in the cytoplasmic vesicle. It localises to the perikaryon. Its subcellular location is the cell projection. It is found in the dendrite. The protein localises to the synaptic cell membrane. The enzyme catalyses K(+)(in) = K(+)(out). It catalyses the reaction NH4(+)(in) = NH4(+)(out). The catalysed reaction is Na(+)(in) = Na(+)(out). It carries out the reaction Rb(+)(in) = Rb(+)(out). The enzyme catalyses Cs(+)(in) = Cs(+)(out). It catalyses the reaction Li(+)(in) = Li(+)(out). The catalysed reaction is L-glutamate(out) = L-glutamate(in). It carries out the reaction chloride(in) = chloride(out). With respect to regulation, inhibited by 100 uM quinine. Slightly inhibited by Ba(+). Activity is first increased and then decreased when the extracellular pH is lowered to 6.0. In terms of biological role, ion channel that contributes to passive transmembrane potassium transport and to the regulation of the resting membrane potential in brain astrocytes, but also in kidney and in other tissues. Forms dimeric channels through which potassium ions pass in accordance with their electrochemical gradient. The channel is selective for K(+) ions at physiological potassium concentrations and at neutral pH, but becomes permeable to Na(+) at subphysiological K(+) levels and upon acidification of the extracellular medium. The homodimer has very low potassium channel activity, when expressed in heterologous systems, and can function as weakly inward rectifying potassium channel. Channel activity is modulated by activation of serotonin receptors. Heterodimeric channels containing KCNK1 and KCNK2 have much higher activity, and may represent the predominant form in astrocytes. Heterodimeric channels containing KCNK1 and KCNK3 or KCNK9 have much higher activity. Heterodimeric channels formed by KCNK1 and KCNK9 may contribute to halothane-sensitive currents. Mediates outward rectifying potassium currents in dentate gyrus granule cells and contributes to the regulation of their resting membrane potential. Contributes to the regulation of action potential firing in dentate gyrus granule cells and down-regulates their intrinsic excitability. Contributes to the regulation of the resting membrane potential of pancreatic beta cells. In astrocytes, the heterodimer formed by KCNK1 and KCNK2 is required for rapid glutamate release in response to activation of G-protein coupled receptors, such as F2R and CNR1. Required for normal ion and water transport in the kidney. The low channel activity of homodimeric KCNK1 may be due to sumoylation. The low channel activity may be due to rapid internalization from the cell membrane and retention in recycling endosomes. Permeable to monovalent cations with ion selectivity for K(+) &gt; Rb(+) &gt;&gt; NH4(+) &gt;&gt; Cs(+) = Na(+) = Li(+). In Rattus norvegicus (Rat), this protein is Potassium channel subfamily K member 1.